Reading from the N-terminus, the 604-residue chain is MANDKGSNWDSALGCSYLLTEAECESDKENEEPGAGVELSVESDRYDSQDEDFLDNASVFQGNHLEVFQALEKKAGEEQLLNLKRKVLGSSENSSGSEASETPAKRQKAGAKRRLFSENEANRVLTPLQVQGGEWRQGFNEDQAISHRLLQLVKSKNATVFKLGLFKSLFLCSFHDLTRLFKNDKTTNQQWVLAVFGIAEVFFEASLELLKKQCSFVQMQKRSHEGGTCAVYLLCFNTAKSRETVRNLMANMLNVREECLLMQPPKIRGLSAALFWFKSSLSPATLKHGALPEWIRAQTTLHDSLATEKFDFGTMVQWAYDHKYAEESKIAYEYALAAGSDSNARAFLATNSQAKHVKDCATMVRHYLRAETQALSMPAYIKTRCKLATGEGSWKSILTFFNYQNIELITFINALKLWLNGIPKKNCLAFIGPPKTGKSMLCNSLIHFLGGSVLSFANHKSHFWLASLADARAALVDDATHACWRYFDTYLRNALDGYPVSIDRKHKAAVQIKAPPLLVTSNIDVQAEERYLYLHSRVQTFRFEQPCTDESGEQPFTITDADWKSFFVRLWGRLDLVDEEEDSEEDGDSMRTFTCSARNTNAVD.

A disordered region spans residues 24-48; that stretch reads CESDKENEEPGAGVELSVESDRYDS. The short motif at 84–86 is the Nuclear localization signal element; sequence KRK. Residues Ser90 and Ser94 each carry the phosphoserine; by host modification. The span at 90–101 shows a compositional bias: low complexity; sequence SSENSSGSEASE. Residues 90–112 form a disordered region; it reads SSENSSGSEASETPAKRQKAGAK. The segment at 141–307 is DNA-binding region; the sequence is EDQAISHRLL…QTTLHDSLAT (167 aa). Positions 406 to 556 constitute an SF3 helicase domain; the sequence is IELITFINAL…CTDESGEQPF (151 aa). 432–439 lines the ATP pocket; the sequence is GPPKTGKS. Lys513 is covalently cross-linked (Glycyl lysine isopeptide (Lys-Gly) (interchain with G-Cter in SUMO)). The disordered stretch occupies residues 581–604; the sequence is EDSEEDGDSMRTFTCSARNTNAVD. A compositionally biased stretch (polar residues) spans 591-604; that stretch reads RTFTCSARNTNAVD.

It belongs to the papillomaviridae E1 protein family. Can form hexamers. Interacts with E2 protein; this interaction increases E1 DNA binding specificity. Interacts with host DNA polymerase subunit POLA2. Interacts with host single stranded DNA-binding protein RPA1. Interacts with host TOP1; this interaction stimulates the enzymatic activity of TOP1. Phosphorylated. In terms of processing, sumoylated.

The protein localises to the host nucleus. It carries out the reaction Couples ATP hydrolysis with the unwinding of duplex DNA by translocating in the 3'-5' direction.. The enzyme catalyses ATP + H2O = ADP + phosphate + H(+). Functionally, ATP-dependent DNA 3'-5' helicase required for initiation of viral DNA replication. It forms a complex with the viral E2 protein. The E1-E2 complex binds to the replication origin which contains binding sites for both proteins. During the initial step, a dimer of E1 interacts with a dimer of protein E2 leading to a complex that binds the viral origin of replication with high specificity. Then, a second dimer of E1 displaces the E2 dimer in an ATP-dependent manner to form the E1 tetramer. Following this, two E1 monomers are added to each half of the site, which results in the formation of two E1 trimers on the viral ori. Subsequently, two hexamers will be created. The double hexamer acts as a bi-directional helicase machinery and unwinds the viral DNA and then recruits the host DNA polymerase to start replication. In Bos taurus (Bovine), this protein is Replication protein E1.